Reading from the N-terminus, the 273-residue chain is Undecaprenyl-diphosphatase (273 aa).

The next 7 membrane-spanning stretches (helical) occupy residues 6-26, 45-65, 90-110, 116-136, 190-210, 222-242, and 252-272; these read SLLI…LPVS, AKTF…VMFW, LTLI…LLFH, LFNP…LIAA, YAAS…ATAL, GDIP…LIAI, and ISFI…YVVF.

The protein belongs to the UppP family.

It localises to the cell inner membrane. The catalysed reaction is di-trans,octa-cis-undecaprenyl diphosphate + H2O = di-trans,octa-cis-undecaprenyl phosphate + phosphate + H(+). Its function is as follows. Catalyzes the dephosphorylation of undecaprenyl diphosphate (UPP). Confers resistance to bacitracin. The sequence is that of Undecaprenyl-diphosphatase from Escherichia coli O139:H28 (strain E24377A / ETEC).